The following is a 426-amino-acid chain: Histidine--tRNA ligase (426 aa).

It belongs to the class-II aminoacyl-tRNA synthetase family. As to quaternary structure, homodimer.

The protein resides in the cytoplasm. The enzyme catalyses tRNA(His) + L-histidine + ATP = L-histidyl-tRNA(His) + AMP + diphosphate + H(+). The protein is Histidine--tRNA ligase of Streptococcus sanguinis (strain SK36).